Reading from the N-terminus, the 306-residue chain is Olfactory receptor 8G17 (306 aa).

The Extracellular portion of the chain corresponds to 1–28 (MEKGNQSTVNKFFLSGLTEQPELQLPLF). Asparagine 5 carries N-linked (GlcNAc...) asparagine glycosylation. Residues 29–49 (LLFLGIYLLTVLGNLGMIILI) traverse the membrane as a helical segment. The Cytoplasmic segment spans residues 50 to 56 (LLSSYLH). A helical membrane pass occupies residues 57–77 (TPMYFFLSSLSFIDFCQSTVI). Topologically, residues 78–97 (TPKMLVKFVREKNEISYPEC) are extracellular. A helical membrane pass occupies residues 98–118 (ITQLCFFVIFAVSESYMLAAM). The Cytoplasmic portion of the chain corresponds to 119–143 (AYDRYVAICSPLLYSSIMSQHKCLS). Residues 144-164 (LVLGVYILGIVCASAHVGCIF) traverse the membrane as a helical segment. Residues 165–196 (RIDFCKSDLINHYFCDLISILNLSCSNIFVND) lie on the Extracellular side of the membrane. The helical transmembrane segment at 197-217 (LVILIFSLINTIFPTLTILSS) threads the bilayer. Residues 218–236 (YAFIIISILRIKSTEGRSK) are Cytoplasmic-facing. A helical transmembrane segment spans residues 237-257 (AFSTCSSHISAVAIFYISAGF). The Extracellular portion of the chain corresponds to 258–271 (TYLNPSSSHSMDEG). The helical transmembrane segment at 272-292 (KVSSIFYTIIVPMLNPLIYSL) threads the bilayer. The Cytoplasmic portion of the chain corresponds to 293–306 (RNKDVKIALKKMIE).

Belongs to the G-protein coupled receptor 1 family.

The protein resides in the cell membrane. In terms of biological role, odorant receptor. The protein is Olfactory receptor 8G17 of Mus musculus (Mouse).